Reading from the N-terminus, the 348-residue chain is Protein RecA (348 aa).

66-73 (GPESSGKT) lines the ATP pocket.

It belongs to the RecA family.

It is found in the cytoplasm. In terms of biological role, can catalyze the hydrolysis of ATP in the presence of single-stranded DNA, the ATP-dependent uptake of single-stranded DNA by duplex DNA, and the ATP-dependent hybridization of homologous single-stranded DNAs. It interacts with LexA causing its activation and leading to its autocatalytic cleavage. The polypeptide is Protein RecA (Legionella pneumophila (strain Paris)).